Consider the following 233-residue polypeptide: Proteasome subunit beta type-6 (233 aa).

Positions 1 to 12 (MDLNLDAPHSMG) are cleaved as a propeptide — removed in mature form. T13 functions as the Nucleophile in the catalytic mechanism.

Belongs to the peptidase T1B family. Component of the 20S core complex of the 26S proteasome. The 26S proteasome is composed of a core protease (CP), known as the 20S proteasome, capped at one or both ends by the 19S regulatory particle (RP/PA700). The 20S proteasome core is composed of 28 subunits that are arranged in four stacked rings, resulting in a barrel-shaped structure. The two end rings are each formed by seven alpha subunits, and the two central rings are each formed by seven beta subunits. The catalytic chamber with the active sites is on the inside of the barrel.

The protein resides in the cytoplasm. Its subcellular location is the nucleus. The catalysed reaction is Cleavage of peptide bonds with very broad specificity.. Its function is as follows. The proteasome is a multicatalytic proteinase complex which is characterized by its ability to cleave peptides with Arg, Phe, Tyr, Leu, and Glu adjacent to the leaving group at neutral or slightly basic pH. The proteasome has an ATP-dependent proteolytic activity. In Arabidopsis thaliana (Mouse-ear cress), this protein is Proteasome subunit beta type-6 (PBA1).